Consider the following 69-residue polypeptide: MQKDIHLKMEPLKITCSTCFTSFDIVSSRKTIAIDICSKCHPFYTGDRTLAKATGQIDKFQKRLQKKQK.

Belongs to the bacterial ribosomal protein bL31 family. Type A subfamily. Part of the 50S ribosomal subunit.

Functionally, binds the 23S rRNA. The sequence is that of Large ribosomal subunit protein bL31 from Mycoplasmopsis pulmonis (strain UAB CTIP) (Mycoplasma pulmonis).